Here is an 81-residue protein sequence, read N- to C-terminus: Large ribosomal subunit protein bL31B (81 aa).

Belongs to the bacterial ribosomal protein bL31 family. Type B subfamily. As to quaternary structure, part of the 50S ribosomal subunit.

The protein is Large ribosomal subunit protein bL31B of Borrelia garinii subsp. bavariensis (strain ATCC BAA-2496 / DSM 23469 / PBi) (Borreliella bavariensis).